The following is a 37-amino-acid chain: Large ribosomal subunit protein bL36 (37 aa).

Belongs to the bacterial ribosomal protein bL36 family.

This is Large ribosomal subunit protein bL36 from Staphylococcus epidermidis (strain ATCC 35984 / DSM 28319 / BCRC 17069 / CCUG 31568 / BM 3577 / RP62A).